Here is a 37-residue protein sequence, read N- to C-terminus: Large ribosomal subunit protein bL36 (37 aa).

It belongs to the bacterial ribosomal protein bL36 family.

The chain is Large ribosomal subunit protein bL36 from Solibacter usitatus (strain Ellin6076).